A 376-amino-acid polypeptide reads, in one-letter code: Deoxyuridine 5'-triphosphate nucleotidohydrolase (376 aa).

This sequence belongs to the dUTPase family. Mg(2+) is required as a cofactor.

It carries out the reaction dUTP + H2O = dUMP + diphosphate + H(+). Its function is as follows. Involved in nucleotide metabolism: produces dUMP, the immediate precursor of thymidine nucleotides and decreases the intracellular concentration of dUTP to avoid uracil incorporation into viral DNA. The chain is Deoxyuridine 5'-triphosphate nucleotidohydrolase from Human herpesvirus 6B (strain Z29) (HHV-6 variant B).